Consider the following 183-residue polypeptide: MTTSSPSQVRQNYHQDSEAAINRQINLELYASYVYLSMSYYFDRDDVALKNFAKYFLHQSHEEREHAEKLMKLQNQRGGRIFLQDIKKPDRDDWESGLNAMECALHLEKNVNQSLLELHKLATDKNDPHLCDFIETHYLDEQVKAIKQLGDHVTNLRKMGAPDSGMAEYLFDKHTLGDSDNES.

At M1 the chain carries N-acetylmethionine. Residue T2 is modified to N-acetylthreonine; in Ferritin heavy chain, N-terminally processed. Positions 11–160 (QNYHQDSEAA…DHVTNLRKMG (150 aa)) constitute a Ferritin-like diiron domain. 5 residues coordinate Fe cation: E28, E63, H66, E108, and Q142. Phosphoserine is present on residues S179 and S183.

Belongs to the ferritin family. Oligomer of 24 subunits. There are two types of subunits: L (light) chain and H (heavy) chain. The major chain can be light or heavy, depending on the species and tissue type. The functional molecule forms a roughly spherical shell with a diameter of 12 nm and contains a central cavity into which the insoluble mineral iron core is deposited. Interacts with NCOA4; NCOA4 promotes targeting of the iron-binding ferritin complex to autolysosomes following starvation or iron depletion. As to expression, ubiquitous.

The protein resides in the cytoplasm. It is found in the lysosome. The protein localises to the cytoplasmic vesicle. It localises to the autophagosome. It catalyses the reaction 4 Fe(2+) + O2 + 4 H(+) = 4 Fe(3+) + 2 H2O. In terms of biological role, stores iron in a soluble, non-toxic, readily available form. Important for iron homeostasis. Has ferroxidase activity. Iron is taken up in the ferrous form and deposited as ferric hydroxides after oxidation. Also plays a role in delivery of iron to cells. Mediates iron uptake in capsule cells of the developing kidney. Delivery to lysosomes is mediated by the cargo receptor NCOA4 for autophagic degradation and release of iron. In Trichosurus vulpecula (Brush-tailed possum), this protein is Ferritin heavy chain (FTH1).